The primary structure comprises 317 residues: NAC domain-containing protein 19 (317 aa).

The 149-residue stretch at 14-162 folds into the NAC domain; the sequence is LPPGFRFYPT…DWVLCRIYKK (149 aa).

In terms of assembly, dimer. Interacts with RHA2A, RHA2B or RHG1A, but not with RHA3A or RHA3B. As to expression, expressed in stems, flowers, cauline leaves and rosettes.

It localises to the nucleus. Functionally, transcription factors that bind specifically to the 5'-CATGTG-3' motif. This is NAC domain-containing protein 19 (NAC019) from Arabidopsis thaliana (Mouse-ear cress).